A 107-amino-acid polypeptide reads, in one-letter code: U1-lycotoxin-Ls1b (107 aa).

Positions 1 to 20 (MMKVLVVVALLVTHISYSSS) are cleaved as a signal peptide. Residues 21–41 (EGIDDLEADELLSLMANEQTR) constitute a propeptide that is removed on maturation. 4 disulfide bridges follow: C44-C59, C51-C68, C58-C86, and C70-C84.

The protein belongs to the neurotoxin 19 (CSTX) family. 04 (U1-Lctx) subfamily. Expressed by the venom gland.

The protein localises to the secreted. This Lycosa singoriensis (Wolf spider) protein is U1-lycotoxin-Ls1b.